Reading from the N-terminus, the 1188-residue chain is Carboxylic acid reductase (1188 aa).

AMP is bound by residues His-315, Ser-408, 429-430 (DG), Thr-434, Asp-507, 519-522 (YVDR), Lys-528, and Lys-629. Residues 665 to 743 (AGERPVIETV…SVAAHIEKER (79 aa)) enclose the Carrier domain. Position 702 is an O-(pantetheine 4'-phosphoryl)serine (Ser-702). Residues 801–804 (NGWL), Arg-828, Arg-838, 868–869 (DF), 894–896 (SGA), Ser-934, Tyr-970, Lys-974, and Ser-997 contribute to the NADP(+) site.

Belongs to the ATP-dependent AMP-binding enzyme family. Carboxylic acid reductase subfamily. Requires pantetheine 4'-phosphate as cofactor.

The enzyme catalyses a carboxylate + ATP + NADPH + H(+) = an aldehyde + AMP + diphosphate + NADP(+). Its function is as follows. Catalyzes the ATP- and NADPH-dependent reduction of carboxylic acids to the corresponding aldehydes. Catalyzes the reduction of a very wide range of carboxylic acids, including benzoic acids, heterocyclic, phenylacetic, phenylpropanoic and fatty acid substrates. This is Carboxylic acid reductase from Segniliparus rugosus (strain ATCC BAA-974 / DSM 45345 / CCUG 50838 / CIP 108380 / JCM 13579 / CDC 945).